We begin with the raw amino-acid sequence, 108 residues long: Peptidyl-prolyl cis-trans isomerase FKBP1A (108 aa).

A PPIase FKBP-type domain is found at 20-108 (GQTCVVHYTG…IFDVELLKLE (89 aa)). Lysine 53 is subject to N6-acetyllysine; alternate. N6-succinyllysine; alternate is present on lysine 53.

It belongs to the FKBP-type PPIase family. FKBP1 subfamily. As to quaternary structure, interacts with TGFBR1; prevents TGFBR1 phosphorylation by TGFBR2 and stabilizes it in the inactive conformation. Interacts with ACVR1B and SMAD7. Identified in a complex composed of RYR1, PDE4D, PKA, FKBP1A and protein phosphatase 1 (PP1). Interacts directly with RYR2 and RYR3. Interacts with GLMN; rapamycin and FK506 abolish the interaction with GLMN in a dose dependent manner. Interacts directly with RYR1.

The protein localises to the cytoplasm. It is found in the cytosol. The protein resides in the sarcoplasmic reticulum membrane. It carries out the reaction [protein]-peptidylproline (omega=180) = [protein]-peptidylproline (omega=0). With respect to regulation, inhibited by both FK506 and rapamycin. Its function is as follows. Keeps in an inactive conformation TGFBR1, the TGF-beta type I serine/threonine kinase receptor, preventing TGF-beta receptor activation in absence of ligand. May modulate the RYR1 calcium channel activity. PPIases accelerate the folding of proteins. It catalyzes the cis-trans isomerization of proline imidic peptide bonds in oligopeptides. The polypeptide is Peptidyl-prolyl cis-trans isomerase FKBP1A (FKBP1A) (Bos taurus (Bovine)).